The chain runs to 429 residues: Inner membrane transport protein RhmT (429 aa).

At 1 to 16 the chain is on the cytoplasmic side; that stretch reads MSTALLDAVVKKNRVR. A helical membrane pass occupies residues 17–37; it reads LIPFMLALYVLAFLDRSNIGF. Residues 38 to 54 are Periplasmic-facing; that stretch reads AKQTYQIDTGLSNEAYA. The helical transmembrane segment at 55 to 75 threads the bilayer; that stretch reads LGAGIFFVVYAFLGVPANLLM. Over 76–81 the chain is Cytoplasmic; sequence RKLGAR. The helical transmembrane segment at 82–102 threads the bilayer; the sequence is TWIGTTTLLWGFLSAAMAWAD. The Periplasmic portion of the chain corresponds to 103–143; the sequence is TEAKFLIVRTLLRAAEAGFFPGMIYLTSQWFPQRNRASIMG. A helical membrane pass occupies residues 144-164; the sequence is LFYMGAPLALTLGSPLSGALL. At 165–174 the chain is on the cytoplasmic side; sequence EMHGFMGHPG. The helical transmembrane segment at 175–195 threads the bilayer; sequence WFWMFVIEGLLAVGAGVFTFF. Residues 196–242 lie on the Periplasmic side of the membrane; that stretch reads WLDDTPEQARFLSKQEKTLLINQLASEEQQKVTSRLSDALRNGRVWQ. A helical transmembrane segment spans residues 243-263; the sequence is LAIIYLTIQVAVYGLIFFLPT. Residues 264–274 lie on the Cytoplasmic side of the membrane; the sequence is QVAALLGTKVG. Residues 275 to 295 traverse the membrane as a helical segment; that stretch reads FTASVVTAIPWVAALFGTWLI. Over 296–324 the chain is Periplasmic; the sequence is PRYSDKTGERRNVAALTLLAAGIGIGLSG. A helical membrane pass occupies residues 325 to 345; it reads LLSPVMAIVALCVAAIGFIAV. Residues 346–361 lie on the Cytoplasmic side of the membrane; sequence QPVFWTMPTQLLSGTA. A helical transmembrane segment spans residues 362-382; sequence LAAGIGFVNLFGAVGGFIAPI. The Periplasmic segment spans residues 383-394; sequence LRVKAETLFASD. Residues 395-415 form a helical membrane-spanning segment; the sequence is AAGLLTLAAVAVIGSLIIFTL. Residues 416 to 429 are Cytoplasmic-facing; sequence RVNRTVAQTDVAHH.

Belongs to the major facilitator superfamily. Phthalate permease family.

It is found in the cell inner membrane. The chain is Inner membrane transport protein RhmT (rhmT) from Escherichia coli (strain K12).